Here is a 299-residue protein sequence, read N- to C-terminus: tRNA pseudouridine synthase B (299 aa).

Catalysis depends on Asp38, which acts as the Nucleophile.

It belongs to the pseudouridine synthase TruB family. Type 1 subfamily.

The enzyme catalyses uridine(55) in tRNA = pseudouridine(55) in tRNA. Functionally, responsible for synthesis of pseudouridine from uracil-55 in the psi GC loop of transfer RNAs. The polypeptide is tRNA pseudouridine synthase B (Alkaliphilus oremlandii (strain OhILAs) (Clostridium oremlandii (strain OhILAs))).